The sequence spans 236 residues: Phosphoribosylaminoimidazole-succinocarboxamide synthase (236 aa).

It belongs to the SAICAR synthetase family.

The catalysed reaction is 5-amino-1-(5-phospho-D-ribosyl)imidazole-4-carboxylate + L-aspartate + ATP = (2S)-2-[5-amino-1-(5-phospho-beta-D-ribosyl)imidazole-4-carboxamido]succinate + ADP + phosphate + 2 H(+). Its pathway is purine metabolism; IMP biosynthesis via de novo pathway; 5-amino-1-(5-phospho-D-ribosyl)imidazole-4-carboxamide from 5-amino-1-(5-phospho-D-ribosyl)imidazole-4-carboxylate: step 1/2. The chain is Phosphoribosylaminoimidazole-succinocarboxamide synthase from Wolinella succinogenes (strain ATCC 29543 / DSM 1740 / CCUG 13145 / JCM 31913 / LMG 7466 / NCTC 11488 / FDC 602W) (Vibrio succinogenes).